Here is a 350-residue protein sequence, read N- to C-terminus: UPF0284 protein MJ1598 (350 aa).

This sequence belongs to the UPF0284 family.

This Methanocaldococcus jannaschii (strain ATCC 43067 / DSM 2661 / JAL-1 / JCM 10045 / NBRC 100440) (Methanococcus jannaschii) protein is UPF0284 protein MJ1598.